The following is a 506-amino-acid chain: Galactose/methyl galactoside import ATP-binding protein MglA (506 aa).

2 ABC transporter domains span residues 14–249 and 264–506; these read LEMS…VGRS and VILE…SLHL. Residue 46 to 53 coordinates ATP; that stretch reads GENGAGKS.

Belongs to the ABC transporter superfamily. Galactose/methyl galactoside importer (TC 3.A.1.2.3) family. As to quaternary structure, the complex is composed of one ATP-binding protein (MglA), two transmembrane proteins (MglC) and a solute-binding protein (MglB).

It is found in the cell inner membrane. The enzyme catalyses D-galactose(out) + ATP + H2O = D-galactose(in) + ADP + phosphate + H(+). The catalysed reaction is methyl beta-D-galactoside(out) + ATP + H2O = methyl beta-D-galactoside(in) + ADP + phosphate + H(+). Functionally, part of the ABC transporter complex MglABC involved in galactose/methyl galactoside import. Responsible for energy coupling to the transport system. This is Galactose/methyl galactoside import ATP-binding protein MglA from Yersinia pestis bv. Antiqua (strain Antiqua).